A 2321-amino-acid chain; its full sequence is Neurogenic locus notch homolog protein 3 (2321 aa).

The segment covering 1 to 14 (MGPGARGRRRRRRP) has biased composition (basic residues). A disordered region spans residues 1-26 (MGPGARGRRRRRRPMSPPPPPPPVRA). An N-terminal signal peptide occupies residues 1–39 (MGPGARGRRRRRRPMSPPPPPPPVRALPLLLLLAGPGAA). Residues 15–25 (MSPPPPPPPVR) show a composition bias toward pro residues. 3 EGF-like domains span residues 40–77 (APPCLDGSPCANGGRCTQLPSREAACLCPPGWVGERCQ), 78–118 (LEDP…PDCS), and 119–156 (LPDPCLSSPCAHGARCSVGPDGRFLCSCPPGYQGRSCR). Topologically, residues 40–1643 (APPCLDGSPC…LEPPEPSVPL (1604 aa)) are extracellular. Intrachain disulfides connect Cys-43-Cys-55, Cys-49-Cys-65, Cys-67-Cys-76, Cys-82-Cys-93, Cys-87-Cys-106, Cys-108-Cys-117, Cys-123-Cys-134, Cys-128-Cys-144, Cys-146-Cys-155, Cys-162-Cys-174, Cys-168-Cys-183, Cys-185-Cys-194, Cys-201-Cys-212, Cys-206-Cys-222, Cys-224-Cys-233, Cys-240-Cys-251, Cys-245-Cys-260, Cys-262-Cys-271, Cys-278-Cys-291, Cys-285-Cys-300, Cys-302-Cys-311, Cys-318-Cys-329, Cys-323-Cys-338, Cys-340-Cys-349, Cys-355-Cys-366, Cys-360-Cys-377, Cys-379-Cys-388, Cys-395-Cys-408, Cys-402-Cys-417, Cys-419-Cys-428, Cys-435-Cys-446, Cys-440-Cys-455, Cys-457-Cys-466, Cys-473-Cys-484, Cys-478-Cys-493, Cys-495-Cys-504, Cys-511-Cys-522, Cys-516-Cys-531, Cys-533-Cys-542, Cys-549-Cys-559, Cys-554-Cys-568, Cys-570-Cys-579, Cys-586-Cys-597, Cys-591-Cys-606, Cys-608-Cys-617, Cys-624-Cys-634, Cys-629-Cys-643, Cys-645-Cys-654, Cys-661-Cys-672, Cys-666-Cys-681, Cys-683-Cys-692, Cys-699-Cys-709, Cys-704-Cys-718, Cys-720-Cys-729, Cys-738-Cys-749, Cys-743-Cys-758, Cys-760-Cys-769, Cys-775-Cys-786, Cys-780-Cys-796, Cys-798-Cys-807, Cys-814-Cys-826, Cys-820-Cys-835, Cys-837-Cys-846, Cys-853-Cys-864, Cys-858-Cys-873, Cys-875-Cys-884, Cys-891-Cys-901, Cys-896-Cys-910, Cys-912-Cys-921, Cys-928-Cys-939, Cys-933-Cys-948, Cys-950-Cys-959, Cys-966-Cys-977, Cys-971-Cys-986, Cys-988-Cys-997, Cys-1004-Cys-1015, Cys-1009-Cys-1022, Cys-1024-Cys-1033, Cys-1040-Cys-1061, Cys-1055-Cys-1070, Cys-1072-Cys-1081, Cys-1088-Cys-1099, Cys-1093-Cys-1108, Cys-1110-Cys-1119, Cys-1126-Cys-1137, Cys-1131-Cys-1146, Cys-1148-Cys-1157, Cys-1164-Cys-1182, Cys-1176-Cys-1191, Cys-1193-Cys-1202, Cys-1209-Cys-1222, Cys-1214-Cys-1232, Cys-1234-Cys-1243, Cys-1250-Cys-1261, Cys-1255-Cys-1275, Cys-1277-Cys-1286, Cys-1293-Cys-1304, Cys-1298-Cys-1313, and Cys-1315-Cys-1324. The EGF-like 4; calcium-binding domain occupies 158–195 (DVDECRVGEPCRHGGTCLNTPGSFRCQCPAGYTGPLCE). The 38-residue stretch at 197–234 (PAVPCAPSPCRNGGTCRQSGDLTYDCACLPGFEGQNCE) folds into the EGF-like 5 domain. The 37-residue stretch at 236–272 (NVDDCPGHRCLNGGTCVDGVNTYNCQCPPEWTGQFCT) folds into the EGF-like 6; calcium-binding domain. The 39-residue stretch at 274 to 312 (DVDECQLQPNACHNGGTCFNTLGGHSCVCVNGWTGESCS) folds into the EGF-like 7 domain. Residues 314-350 (NIDDCATAVCFHGATCHDRVASFYCACPMGKTGLLCH) form the EGF-like 8; calcium-binding domain. Residues 351–389 (LDDACVSNPCHEDAICDTNPVNGRAICTCPPGFTGGACD) enclose the EGF-like 9 domain. One can recognise an EGF-like 10; calcium-binding domain in the interval 391-429 (DVDECSIGANPCEHLGRCVNTQGSFLCQCGRGYTGPRCE). Residues 431–467 (DVNECLSGPCRNQATCLDRIGQFTCICMAGFTGTYCE) form the EGF-like 11; calcium-binding domain. One can recognise an EGF-like 12; calcium-binding domain in the interval 469–505 (DIDECQSSPCVNGGVCKDRVNGFSCTCPSGFSGSTCQ). Positions 507–543 (DVDECASTPCRNGAKCVDQPDGYECRCAEGFEGTLCD) constitute an EGF-like 13; calcium-binding domain. Positions 545-580 (NVDDCSPDPCHHGRCVDGIASFSCACAPGYTGTRCE) constitute an EGF-like 14; calcium-binding domain. One can recognise an EGF-like 15; calcium-binding domain in the interval 582 to 618 (QVDECRSQPCRHGGKCLDLVDKYLCRCPSGTTGVNCE). An EGF-like 16; calcium-binding domain is found at 620–655 (NIDDCASNPCTFGVCRDGINRYDCVCQPGFTGPLCN). The 37-residue stretch at 657–693 (EINECASSPCGEGGSCVDGENGFRCLCPPGSLPPLCL) folds into the EGF-like 17; calcium-binding domain. EGF-like domains are found at residues 695 to 730 (PSHPCAHEPCSHGICYDAPGGFRCVCEPGWSGPRCS), 734 to 770 (ARDACESQPCRAGGTCSSDGMGFHCTCPPGVQGRQCE), and 771 to 808 (LLSPCTPNPCEHGGRCESAPGQLPVCSCPQGWQGPRCQ). Residues 810 to 847 (DVDECAGPAPCGPHGICTNLAGSFSCTCHGGYTGPSCD) form the EGF-like 21; calcium-binding domain. An EGF-like 22; calcium-binding domain is found at 849–885 (DINDCDPNPCLNGGSCQDGVGSFSCSCLPGFAGPRCA). The region spanning 887–922 (DVDECLSNPCGPGTCTDHVASFTCTCPPGYGGFHCE) is the EGF-like 23; calcium-binding domain. 5 consecutive EGF-like domains span residues 924 to 960 (DLPDCSPSSCFNGGTCVDGVNSFSCLCRPGYTGAHCQ), 962 to 998 (EADPCLSRPCLHGGVCSAAHPGFRCTCLESFTGPQCQ), 1000 to 1034 (LVDWCSRQPCQNGGRCVQTGAYCLCPPGWSGRLCD), 1036 to 1082 (RSLP…SHCE), and 1084 to 1120 (EVDPCLAQPCQHGGTCRGYMGGYMCECLPGYNGDNCE). The region spanning 1122 to 1158 (DVDECASQPCQHGGSCIDLVARYLCSCPPGTLGVLCE) is the EGF-like 29; calcium-binding domain. One can recognise an EGF-like 30; calcium-binding domain in the interval 1160 to 1203 (NEDDCGPGPPLDSGPRCLHNGTCVDLVGGFRCTCPPGYTGLRCE). N-linked (GlcNAc...) asparagine glycosylation is present at Asn-1179. EGF-like domains are found at residues 1205–1244 (DINECRSGACHAAHTRDCLQDPGGGFRCLCHAGFSGPRCQ), 1246–1287 (VLSP…PRCE), 1289–1325 (VARSCRELQCPVGVPCQQTPRGPRCACPPGLSGPSCR), and 1335–1373 (SNASCAAAPCLHGGSCRPAPLAPFFRCACAQGWTGPRCE). Asn-1336 carries an N-linked (GlcNAc...) asparagine glycan. 12 disulfide bridges follow: Cys-1339-Cys-1350, Cys-1344-Cys-1361, Cys-1363-Cys-1372, Cys-1387-Cys-1410, Cys-1392-Cys-1405, Cys-1401-Cys-1417, Cys-1428-Cys-1451, Cys-1433-Cys-1446, Cys-1442-Cys-1458, Cys-1467-Cys-1493, Cys-1475-Cys-1488, and Cys-1484-Cys-1500. LNR repeat units follow at residues 1387–1427 (CPRA…PWRQ), 1428–1458 (CEALQCWRLFNNSRCDPACSSPACLYDNFDC), and 1467–1505 (CNPVYEKYCADHFADGRCDQGCNTEECGWDGLDCASEVP). N-linked (GlcNAc...) asparagine glycosylation occurs at Asn-1438. A helical transmembrane segment spans residues 1644 to 1664 (LPLLVAGAVLLLVILVLGVMV). The Cytoplasmic segment spans residues 1665 to 2321 (ARRKREHSTL…EVTPKRQVLA (657 aa)). ANK repeat units follow at residues 1838–1867 (TGETALHLAARYARADAAKRLLDAGADTNA), 1871–1901 (SGRTPLHTAVTADAQGVFQILIRNRSTDLDA), 1905–1934 (DGSTALILAARLAVEGMVEELIASHADVNA), 1938–1967 (LGKSALHWAAAVNNVEATLALLKNGANKDM), and 1971–2000 (KEETPLFLAAREGSYEAAKLLLDHFANREI). A disordered region spans residues 2024 to 2120 (LDQPSGPRSP…FGGPPASPGG (97 aa)). The span at 2039–2053 (LGPLLCPPGAFLPGL) shows a compositional bias: low complexity. Arg-2174 carries the post-translational modification Omega-N-methylarginine. The disordered stretch occupies residues 2190-2321 (APGPQLLNPG…EVTPKRQVLA (132 aa)). A compositionally biased stretch (low complexity) spans 2269–2289 (STPSPATATGAMATTTGALPA). Polar residues predominate over residues 2296–2308 (VPSSLAQAQTQLG).

The protein belongs to the NOTCH family. Heterodimer of a C-terminal fragment N(TM) and a N-terminal fragment N(EC) which are probably linked by disulfide bonds. Interacts with MAML1, MAML2 and MAML3 which act as transcriptional coactivators for NOTCH3. Interacts with PSMA1. Interacts with HIF1AN. Post-translationally, synthesized in the endoplasmic reticulum as an inactive form which is proteolytically cleaved by a furin-like convertase in the trans-Golgi network before it reaches the plasma membrane to yield an active, ligand-accessible form. Cleavage results in a C-terminal fragment N(TM) and a N-terminal fragment N(EC). Following ligand binding, it is cleaved by TNF-alpha converting enzyme (TACE) to yield a membrane-associated intermediate fragment called notch extracellular truncation (NEXT). This fragment is then cleaved by presenilin dependent gamma-secretase to release a notch-derived peptide containing the intracellular domain (NICD) from the membrane. Phosphorylated. In terms of processing, hydroxylated by HIF1AN. Ubiquitously expressed in fetal and adult tissues.

The protein resides in the cell membrane. The protein localises to the nucleus. Functions as a receptor for membrane-bound ligands Jagged1, Jagged2 and Delta1 to regulate cell-fate determination. Upon ligand activation through the released notch intracellular domain (NICD) it forms a transcriptional activator complex with RBPJ/RBPSUH and activates genes of the enhancer of split locus. Affects the implementation of differentiation, proliferation and apoptotic programs. This Homo sapiens (Human) protein is Neurogenic locus notch homolog protein 3 (NOTCH3).